The chain runs to 432 residues: Glutamate-1-semialdehyde 2,1-aminomutase (432 aa).

K270 is subject to N6-(pyridoxal phosphate)lysine.

It belongs to the class-III pyridoxal-phosphate-dependent aminotransferase family. HemL subfamily. In terms of assembly, homodimer. The cofactor is pyridoxal 5'-phosphate.

It is found in the cytoplasm. It carries out the reaction (S)-4-amino-5-oxopentanoate = 5-aminolevulinate. It functions in the pathway porphyrin-containing compound metabolism; protoporphyrin-IX biosynthesis; 5-aminolevulinate from L-glutamyl-tRNA(Glu): step 2/2. The sequence is that of Glutamate-1-semialdehyde 2,1-aminomutase from Acinetobacter baumannii (strain ATCC 17978 / DSM 105126 / CIP 53.77 / LMG 1025 / NCDC KC755 / 5377).